We begin with the raw amino-acid sequence, 165 residues long: Cytochrome c-550-like protein (165 aa).

An N-terminal signal peptide occupies residues 1-30 (MLNKSLLIRFVLTILIIVQVIIFDTQPVQA). Residues Cys-75, Cys-78, His-79, and Cys-129 each coordinate heme c.

The protein belongs to the cytochrome c family. PsbV subfamily. Heme c is required as a cofactor.

It localises to the cellular thylakoid membrane. In terms of biological role, possible low-potential cytochrome c. The sequence is that of Cytochrome c-550-like protein (psbV2) from Trichodesmium erythraeum (strain IMS101).